A 794-amino-acid polypeptide reads, in one-letter code: MTENITINMPEIVPLYPLREIIAFPYMVFTIFLKQEDMPPFEEAVLFNNLVALVKLREEPTGELFPALHEIGTLCKVMQINKLAGGGAKVVLEGVIRVRLLAIVQQTPVALSRLEPVREFAEKSMVSEALVGSLNALLKIALSYGRPLPDDVMKMIDFIDNPARLSDLVALYLNLPIDELQKLLETVDPLERLKKVYMHLTNEVQRLQIKGEVQAEVTKKVGKSQKEFLLREQMKQIQEELGEEDSRLGEANELRSKVESAHMPEDVRRIAEKEMRRLERINPASPEYTVSRTYLDYLTTIPWQVSTPDNRDINQAETILNEDHYDLKKVKERILEYLAVRSLKDKMKGPILCFVGPPGVGKTSLGKSIARTLGRKFIRISLGGMRDEAEIRGHRRTYIGALPGRIIQEINRAGSNNPVFMLDEVDKIGADFRGDPASALLEVLDPEQNFSFTDHYLDVPFDLTNVMFITTANQLDPIPAPLKDRMEVITLSGYTDEEKLNIAKSYLVAREVEENGLASMAPQFTDEAIYRVTHDYTREAGVRNLQRNIASICRKIAKEVAQGKKARPIVNPETVSELLGAPKFFDEVASEKDRVGVATGLAWTESGGDIIFVEATKMKGKEDLILTGSLGEVMKESVRAALSFVKANCAELGIDKKMFDETTLHIHVPAGSIPKDGPSAGITMATAIVSLFSGRAARRDVAMTGEMSLTGRVLAIGGLKEKVLAARRAGVKKVLAPAKNKKDLEDIPENVKNELEFFFVEDIREVFVQALNPTSPAPTAATSARTPAGAPPPQ.

The Lon N-terminal domain maps to 13–204 (VPLYPLREII…KVYMHLTNEV (192 aa)). 356–363 (GPPGVGKT) serves as a coordination point for ATP. Residues 592 to 773 (KDRVGVATGL…REVFVQALNP (182 aa)) form the Lon proteolytic domain. Active-site residues include S679 and K722. The span at 774–788 (TSPAPTAATSARTPA) shows a compositional bias: low complexity. Residues 774 to 794 (TSPAPTAATSARTPAGAPPPQ) are disordered.

This sequence belongs to the peptidase S16 family. In terms of assembly, homohexamer. Organized in a ring with a central cavity.

It is found in the cytoplasm. The catalysed reaction is Hydrolysis of proteins in presence of ATP.. Functionally, ATP-dependent serine protease that mediates the selective degradation of mutant and abnormal proteins as well as certain short-lived regulatory proteins. Required for cellular homeostasis and for survival from DNA damage and developmental changes induced by stress. Degrades polypeptides processively to yield small peptide fragments that are 5 to 10 amino acids long. Binds to DNA in a double-stranded, site-specific manner. The polypeptide is Lon protease (Citrifermentans bemidjiense (strain ATCC BAA-1014 / DSM 16622 / JCM 12645 / Bem) (Geobacter bemidjiensis)).